A 483-amino-acid polypeptide reads, in one-letter code: UDP-N-acetylmuramate--L-alanine ligase (483 aa).

Residue 128 to 134 coordinates ATP; sequence GTHGKTT.

The protein belongs to the MurCDEF family.

It is found in the cytoplasm. It catalyses the reaction UDP-N-acetyl-alpha-D-muramate + L-alanine + ATP = UDP-N-acetyl-alpha-D-muramoyl-L-alanine + ADP + phosphate + H(+). Its pathway is cell wall biogenesis; peptidoglycan biosynthesis. In terms of biological role, cell wall formation. The chain is UDP-N-acetylmuramate--L-alanine ligase from Shewanella violacea (strain JCM 10179 / CIP 106290 / LMG 19151 / DSS12).